The following is a 400-amino-acid chain: Large envelope protein (400 aa).

N-acetylmethionine is present on Met1. Gly2 carries the N-myristoyl glycine; by host lipid modification. The pre-S1 stretch occupies residues 2–119; that stretch reads GAPLSTARRG…PPLRDTHPQA (118 aa). Positions 2–174 are pre-S; sequence GAPLSTARRG…FSKTGDPAMN (173 aa). Residues 2–181 are Virion surface; in external conformation-facing; that stretch reads GAPLSTARRG…AMNMENITSG (180 aa). The Intravirion; in internal conformation segment spans residues 2–253; sequence GAPLSTARRG…PGYRWMCLRR (252 aa). An N-linked (GlcNAc...) asparagine glycan is attached at Pro4. The interval 70-115 is disordered; the sequence is PHGGLLGWSPQAQGILTTSPPDPPPASTNRRSGRKPTPVSPPLRDT. Polar residues predominate over residues 79 to 88; sequence PQAQGILTTS. Residues 120–174 are pre-S2; sequence MQWNSTQFHQALLDPRVRGLYFPAGGSSSETQNPVPTIASLTSSIFSKTGDPAMN. A helical membrane pass occupies residues 182 to 202; that stretch reads LLGPLLVLQAVCFLLTKILTI. The Intravirion; in external conformation portion of the chain corresponds to 203 to 253; sequence PQSLDSWWTSLNFLGVPPGCPGQNSQSPISNHLPTSCPPTCPGYRWMCLRR. A helical membrane pass occupies residues 254–274; sequence FIIFLFILLLCLIFLLVLLDY. Residues 275 to 348 lie on the Virion surface side of the membrane; that stretch reads QGMLPVCPLL…WASARFSWLS (74 aa). Asn320 is a glycosylation site (N-linked (GlcNAc...) asparagine; by host). The chain crosses the membrane as a helical span at residues 349–369; that stretch reads LLVQFVQWCVGLSPTVWLLVI. Residues 370-375 lie on the Intravirion side of the membrane; sequence WMIWYW. The helical transmembrane segment at 376–398 threads the bilayer; the sequence is GPNLCSILSPFIPLLPIFCYLWA. Residues 399 to 400 lie on the Virion surface side of the membrane; that stretch reads SI.

This sequence belongs to the orthohepadnavirus major surface antigen family. As to quaternary structure, in its internal form (Li-HBsAg), interacts with the capsid protein and with the isoform S. Interacts with host chaperone CANX. In terms of assembly, associates with host chaperone CANX through its pre-S2 N glycan; this association may be essential for isoform M proper secretion. Interacts with isoform L. Interacts with the antigens of satellite virus HDV (HDVAgs); this interaction is required for encapsidation of HDV genomic RNA. Isoform M is N-terminally acetylated by host at a ratio of 90%, and N-glycosylated by host at the pre-S2 region. In terms of processing, myristoylated.

It localises to the virion membrane. The large envelope protein exists in two topological conformations, one which is termed 'external' or Le-HBsAg and the other 'internal' or Li-HBsAg. In its external conformation the protein attaches the virus to cell receptors and thereby initiating infection. This interaction determines the species specificity and liver tropism. This attachment induces virion internalization predominantly through caveolin-mediated endocytosis. The large envelope protein also assures fusion between virion membrane and endosomal membrane. In its internal conformation the protein plays a role in virion morphogenesis and mediates the contact with the nucleocapsid like a matrix protein. Functionally, the middle envelope protein plays an important role in the budding of the virion. It is involved in the induction of budding in a nucleocapsid independent way. In this process the majority of envelope proteins bud to form subviral lipoprotein particles of 22 nm of diameter that do not contain a nucleocapsid. The sequence is that of Large envelope protein from Homo sapiens (Human).